The sequence spans 256 residues: MAVGKNKRLSKGKKGLKKKAQDPFTRKDWYGIKAPAPFAIRDVGKTLVNRTTGLKNANDALKGRIVEVSLADLQKDEDHSFRKIKLRVDEVQGKNCLTNFHGLDFTSDKLRSLVRKWQTLIEANVTVMTTDHYLLRLFAIAFTKRRPNQIKKTTYAATSQIRAIRRKMTEIIQREASSCTLTQLTSKLIPEVIGREIEKATQGIYPLQNVHIRKVKLLKQPKFDLGALMTLHGESSTDEQGQKVEREFREQVLESV.

The segment covering 1–18 has biased composition (basic residues); sequence MAVGKNKRLSKGKKGLKK. Residues 1–20 are disordered; that stretch reads MAVGKNKRLSKGKKGLKKKA. Ala-2 is modified (N-acetylalanine; partial).

This sequence belongs to the eukaryotic ribosomal protein eS1 family. As to quaternary structure, component of the small ribosomal subunit. Mature ribosomes consist of a small (40S) and a large (60S) subunit. The 40S subunit contains about 33 different proteins and 1 molecule of RNA (18S). The 60S subunit contains about 49 different proteins and 3 molecules of RNA (25S, 5.8S and 5S).

It is found in the cytoplasm. The polypeptide is Small ribosomal subunit protein eS1 (Chaetomium globosum (strain ATCC 6205 / CBS 148.51 / DSM 1962 / NBRC 6347 / NRRL 1970) (Soil fungus)).